Here is a 942-residue protein sequence, read N- to C-terminus: Cilia- and flagella-associated protein 69 (942 aa).

The segment covering 1-16 (MSTAEASATTADAAEA) has biased composition (low complexity). The interval 1 to 25 (MSTAEASATTADAAEAGGRTKTGSP) is disordered.

Expressed in ciliated olfactory sensory neurons (at protein level). Expressed in testis, specifically in sperm (at protein level).

It localises to the cell projection. The protein localises to the cilium. Its subcellular location is the flagellum. In terms of biological role, cilium- and flagellum-associated protein. In the olfactory epithelium, regulates the speed of activation and termination of the odor response and thus contributes to the robustness of olfactory transduction pathways. Required for sperm flagellum assembly and stability. This is Cilia- and flagella-associated protein 69 from Mus musculus (Mouse).